The sequence spans 225 residues: MVKPLALDETTLEAPEWRISDLPVPYEEAVKTMEARAAAIAEGTAPELVWLLEHPALYTAGTSADETDLLDPKRFPVFSTGRGGQYTYHGPGQRVAYVMLDLKRRKPDVRAYVQDLERWLIATLAEFNVTGETRPDRVGVWVKRPEKGLTAEDKIAAIGVRIRKWVTFHGVSLNVEPDLDHFSGIVPCGISQFGVTSLADLGHTATMADVDLALKKTFRDVFGRG.

A BPL/LPL catalytic domain is found at 43 to 225; that stretch reads GTAPELVWLL…KTFRDVFGRG (183 aa). Substrate-binding positions include 82 to 89, 157 to 159, and 170 to 172; these read RGGQYTYH, AIG, and GVS. The Acyl-thioester intermediate role is filled by C188.

It belongs to the LipB family.

The protein localises to the cytoplasm. The enzyme catalyses octanoyl-[ACP] + L-lysyl-[protein] = N(6)-octanoyl-L-lysyl-[protein] + holo-[ACP] + H(+). It participates in protein modification; protein lipoylation via endogenous pathway; protein N(6)-(lipoyl)lysine from octanoyl-[acyl-carrier-protein]: step 1/2. Its function is as follows. Catalyzes the transfer of endogenously produced octanoic acid from octanoyl-acyl-carrier-protein onto the lipoyl domains of lipoate-dependent enzymes. Lipoyl-ACP can also act as a substrate although octanoyl-ACP is likely to be the physiological substrate. This chain is Octanoyltransferase, found in Parvibaculum lavamentivorans (strain DS-1 / DSM 13023 / NCIMB 13966).